The sequence spans 390 residues: Acetylornithine aminotransferase (390 aa).

Pyridoxal 5'-phosphate is bound by residues 105–106 (GA) and F132. Residue R135 participates in N(2)-acetyl-L-ornithine binding. 217–220 (DEVQ) is a pyridoxal 5'-phosphate binding site. An N6-(pyridoxal phosphate)lysine modification is found at K246. S274 contributes to the N(2)-acetyl-L-ornithine binding site. A pyridoxal 5'-phosphate-binding site is contributed by T275.

It belongs to the class-III pyridoxal-phosphate-dependent aminotransferase family. ArgD subfamily. In terms of assembly, homodimer. Pyridoxal 5'-phosphate is required as a cofactor.

It is found in the cytoplasm. It catalyses the reaction N(2)-acetyl-L-ornithine + 2-oxoglutarate = N-acetyl-L-glutamate 5-semialdehyde + L-glutamate. It functions in the pathway amino-acid biosynthesis; L-arginine biosynthesis; N(2)-acetyl-L-ornithine from L-glutamate: step 4/4. The polypeptide is Acetylornithine aminotransferase (Methanothermobacter thermautotrophicus (strain ATCC 29096 / DSM 1053 / JCM 10044 / NBRC 100330 / Delta H) (Methanobacterium thermoautotrophicum)).